The chain runs to 313 residues: Platelet glycoprotein VI (313 aa).

Positions 1–21 are cleaved as a signal peptide; that stretch reads MSPASPTFFCIGLCVLQVIQT. The Extracellular portion of the chain corresponds to 22–265; it reads QSGPLPKPSL…FGFAHQHYAK (244 aa). Ig-like C2-type domains lie at 27–105 and 115–197; these read PKPS…DQLE and PSLS…APSD. Residues cysteine 49 and cysteine 89 are joined by a disulfide bond. N-linked (GlcNAc...) asparagine glycosylation is present at asparagine 93. An intrachain disulfide couples cysteine 135 to cysteine 181. The interval 213 to 236 is disordered; it reads VPTEESFPVTESSRRPSILPTNKI. The N-linked (GlcNAc...) asparagine glycan is linked to asparagine 244. The helical transmembrane segment at 266–286 threads the bilayer; that stretch reads GNLVRICLGATIIIILLGLLA. Residues 287–313 are Cytoplasmic-facing; it reads EDWHSRKKCLQHRMRALQRPLPPLPLA.

Associated with Fc receptor gamma chain. The GPVI:FcRgamma complex is associated with the Src kinase family FYN and LYN. Interacts with TRAF4. Interacts with COL1A1, but not with COL4A4. In terms of tissue distribution, megakaryocytes and platelets.

It localises to the cell membrane. Its function is as follows. Collagen receptor involved in collagen-induced platelet adhesion and activation. Plays a key role in platelet procoagulant activity and subsequent thrombin and fibrin formation. This procoagulant function may contribute to arterial and venous thrombus formation. The signaling pathway involves the FcR gamma-chain, the Src kinases (likely FYN or LYN) and SYK, the adapter protein LAT and leads to the activation of PLCG2. The protein is Platelet glycoprotein VI of Mus musculus (Mouse).